The chain runs to 214 residues: Probable chemoreceptor glutamine deamidase CheD (214 aa).

Belongs to the CheD family.

The enzyme catalyses L-glutaminyl-[protein] + H2O = L-glutamyl-[protein] + NH4(+). In terms of biological role, probably deamidates glutamine residues to glutamate on methyl-accepting chemotaxis receptors (MCPs), playing an important role in chemotaxis. The protein is Probable chemoreceptor glutamine deamidase CheD of Vibrio vulnificus (strain CMCP6).